A 238-amino-acid polypeptide reads, in one-letter code: Uridylate kinase (238 aa).

12–15 contacts ATP; that stretch reads KLSG. Gly-54 is a binding site for UMP. ATP contacts are provided by Gly-55 and Arg-59. UMP contacts are provided by residues Asp-74 and 135 to 142; that span reads TGNPYFTT. The ATP site is built by Thr-162, Asn-163, Tyr-168, and Asp-171.

This sequence belongs to the UMP kinase family. Homohexamer.

The protein resides in the cytoplasm. It catalyses the reaction UMP + ATP = UDP + ADP. It participates in pyrimidine metabolism; CTP biosynthesis via de novo pathway; UDP from UMP (UMPK route): step 1/1. Inhibited by UTP. Its function is as follows. Catalyzes the reversible phosphorylation of UMP to UDP. The chain is Uridylate kinase from Nitrobacter winogradskyi (strain ATCC 25391 / DSM 10237 / CIP 104748 / NCIMB 11846 / Nb-255).